The primary structure comprises 310 residues: Tetrahydromethanopterin S-methyltransferase subunit H (310 aa).

It belongs to the MtrH family. As to quaternary structure, the complex is composed of 8 subunits; MtrA, MtrB, MtrC, MtrD, MtrE, MtrF, MtrG and MtrH.

The catalysed reaction is 5-methyl-5,6,7,8-tetrahydromethanopterin + coenzyme M + 2 Na(+)(in) = 5,6,7,8-tetrahydromethanopterin + methyl-coenzyme M + 2 Na(+)(out). It functions in the pathway one-carbon metabolism; methanogenesis from CO(2); methyl-coenzyme M from 5,10-methylene-5,6,7,8-tetrahydromethanopterin: step 2/2. Its function is as follows. Part of a complex that catalyzes the formation of methyl-coenzyme M and tetrahydromethanopterin from coenzyme M and methyl-tetrahydromethanopterin. This is an energy-conserving, sodium-ion translocating step. MtrH catalyzes the transfer of the methyl group from methyl-tetrahydromethanopterin to the corrinoid prosthetic group of MtrA. The chain is Tetrahydromethanopterin S-methyltransferase subunit H from Methanothermobacter thermautotrophicus (strain ATCC 29096 / DSM 1053 / JCM 10044 / NBRC 100330 / Delta H) (Methanobacterium thermoautotrophicum).